The chain runs to 729 residues: Probable tape measure protein (729 aa).

Positions 9–35 (IMGDADQLSETLDQASEEVSAFGEQAK) form a coiled coil.

It belongs to the P2likevirus tape measure protein family.

In terms of biological role, serves as a base for tail tube protein polymerization and acts as a template for tail length determination. This is Probable tape measure protein from Streptomyces phage phiC31 (Bacteriophage phi-C31).